Consider the following 364-residue polypeptide: Methylthioribose-1-phosphate isomerase (364 aa).

D254 acts as the Proton donor in catalysis.

This sequence belongs to the eIF-2B alpha/beta/delta subunits family. MtnA subfamily.

It is found in the cytoplasm. Its subcellular location is the nucleus. The enzyme catalyses 5-(methylsulfanyl)-alpha-D-ribose 1-phosphate = 5-(methylsulfanyl)-D-ribulose 1-phosphate. It participates in amino-acid biosynthesis; L-methionine biosynthesis via salvage pathway; L-methionine from S-methyl-5-thio-alpha-D-ribose 1-phosphate: step 1/6. Its function is as follows. Catalyzes the interconversion of methylthioribose-1-phosphate (MTR-1-P) into methylthioribulose-1-phosphate (MTRu-1-P). The sequence is that of Methylthioribose-1-phosphate isomerase from Drosophila yakuba (Fruit fly).